A 98-amino-acid chain; its full sequence is UPF0235 protein APJL_1398 (98 aa).

It belongs to the UPF0235 family.

The polypeptide is UPF0235 protein APJL_1398 (Actinobacillus pleuropneumoniae serotype 3 (strain JL03)).